The following is a 171-amino-acid chain: ATP synthase subunit b (171 aa).

The chain crosses the membrane as a helical span at residues 2-22 (FLVKMVLGFLILLSPLCATGL).

This sequence belongs to the ATPase B chain family. As to quaternary structure, F-type ATPases have 2 components, F(1) - the catalytic core - and F(0) - the membrane proton channel. F(1) has five subunits: alpha(3), beta(3), gamma(1), delta(1), epsilon(1). F(0) has three main subunits: a(1), b(2) and c(10-14). The alpha and beta chains form an alternating ring which encloses part of the gamma chain. F(1) is attached to F(0) by a central stalk formed by the gamma and epsilon chains, while a peripheral stalk is formed by the delta and b chains.

It is found in the cell inner membrane. In terms of biological role, f(1)F(0) ATP synthase produces ATP from ADP in the presence of a proton or sodium gradient. F-type ATPases consist of two structural domains, F(1) containing the extramembraneous catalytic core and F(0) containing the membrane proton channel, linked together by a central stalk and a peripheral stalk. During catalysis, ATP synthesis in the catalytic domain of F(1) is coupled via a rotary mechanism of the central stalk subunits to proton translocation. Its function is as follows. Component of the F(0) channel, it forms part of the peripheral stalk, linking F(1) to F(0). The sequence is that of ATP synthase subunit b from Helicobacter pylori (strain HPAG1).